We begin with the raw amino-acid sequence, 502 residues long: Glutamate--tRNA ligase (502 aa).

The 'HIGH' region signature appears at 9–19 (PSPTGFPHVGT). The 'KMSKS' region motif lies at 250–254 (KLSKR). Lys253 contributes to the ATP binding site.

The protein belongs to the class-I aminoacyl-tRNA synthetase family. Glutamate--tRNA ligase type 1 subfamily. As to quaternary structure, monomer.

It is found in the cytoplasm. It catalyses the reaction tRNA(Glu) + L-glutamate + ATP = L-glutamyl-tRNA(Glu) + AMP + diphosphate. Its function is as follows. Catalyzes the attachment of glutamate to tRNA(Glu) in a two-step reaction: glutamate is first activated by ATP to form Glu-AMP and then transferred to the acceptor end of tRNA(Glu). The sequence is that of Glutamate--tRNA ligase from Acinetobacter baumannii (strain SDF).